We begin with the raw amino-acid sequence, 247 residues long: ATP synthase subunit a (247 aa).

A run of 6 helical transmembrane segments spans residues 23–43 (ISFT…TLFL), 90–110 (LFMF…VIGF), 116–136 (VIVT…IGFA), 145–165 (MFFP…IELI), 194–214 (GFVV…FAFL), and 215–235 (SAIT…FTIL).

The protein belongs to the ATPase A chain family. In terms of assembly, F-type ATPases have 2 components, CF(1) - the catalytic core - and CF(0) - the membrane proton channel. CF(1) has five subunits: alpha(3), beta(3), gamma(1), delta(1), epsilon(1). CF(0) has three main subunits: a(1), b(2) and c(9-12). The alpha and beta chains form an alternating ring which encloses part of the gamma chain. CF(1) is attached to CF(0) by a central stalk formed by the gamma and epsilon chains, while a peripheral stalk is formed by the delta and b chains.

The protein localises to the cell inner membrane. Key component of the proton channel; it plays a direct role in the translocation of protons across the membrane. This is ATP synthase subunit a from Paramagnetospirillum magneticum (strain ATCC 700264 / AMB-1) (Magnetospirillum magneticum).